The primary structure comprises 110 residues: Small ribosomal subunit protein uS17 (110 aa).

The protein belongs to the universal ribosomal protein uS17 family. In terms of assembly, part of the 30S ribosomal subunit.

Functionally, one of the primary rRNA binding proteins, it binds specifically to the 5'-end of 16S ribosomal RNA. This chain is Small ribosomal subunit protein uS17, found in Petrotoga mobilis (strain DSM 10674 / SJ95).